The primary structure comprises 241 residues: 3-oxoacyl-[acyl-carrier-protein] reductase FabG (241 aa).

NADP(+) is bound by residues 13 to 16, serine 38, 57 to 58, and asparagine 83; these read GASG and EV. Serine 135 is a substrate binding site. Tyrosine 148 functions as the Proton acceptor in the catalytic mechanism. NADP(+) is bound by residues 148–152 and isoleucine 181; that span reads YCASK.

This sequence belongs to the short-chain dehydrogenases/reductases (SDR) family. As to quaternary structure, homotetramer.

The enzyme catalyses a (3R)-hydroxyacyl-[ACP] + NADP(+) = a 3-oxoacyl-[ACP] + NADPH + H(+). The protein operates within lipid metabolism; fatty acid biosynthesis. Functionally, catalyzes the NADPH-dependent reduction of beta-ketoacyl-ACP substrates to beta-hydroxyacyl-ACP products, the first reductive step in the elongation cycle of fatty acid biosynthesis. The chain is 3-oxoacyl-[acyl-carrier-protein] reductase FabG (fabG) from Rickettsia conorii (strain ATCC VR-613 / Malish 7).